The following is a 231-amino-acid chain: Chalcone--flavanone isomerase (231 aa).

Residues Thr-46, Asn-112, and Ser-189 each contribute to the substrate site.

It belongs to the chalcone isomerase family.

The catalysed reaction is a chalcone = a flavanone.. It participates in secondary metabolite biosynthesis; flavonoid biosynthesis. Its function is as follows. Catalyzes the intramolecular cyclization of bicyclic chalcones into tricyclic (S)-flavanones. Responsible for the isomerization of 4,2',4',6'-tetrahydroxychalcone (also termed chalcone) into naringenin. The sequence is that of Chalcone--flavanone isomerase (CHI) from Hordeum vulgare (Barley).